The chain runs to 501 residues: NAD(P)H-quinone oxidoreductase subunit 2, chloroplastic (501 aa).

14 helical membrane-spanning segments follow: residues 15 to 35, 42 to 62, 82 to 102, 107 to 127, 132 to 152, 167 to 187, 210 to 230, 244 to 264, 278 to 298, 307 to 327, 334 to 354, 378 to 398, 410 to 430, and 466 to 486; these read ILPE…DLIL, VFFF…IFQL, IFRI…IDFI, LAIT…MFLC, LITI…LSGY, LLIG…LYGL, FGSL…LSLV, PTPV…ALLV, WHSL…LVAI, LAYS…TGNF, IVYL…IILF, FSLA…GFFG, GLYF…YYYL, and VSII…NPII.

This sequence belongs to the complex I subunit 2 family. In terms of assembly, NDH is composed of at least 16 different subunits, 5 of which are encoded in the nucleus.

The protein resides in the plastid. The protein localises to the chloroplast thylakoid membrane. It carries out the reaction a plastoquinone + NADH + (n+1) H(+)(in) = a plastoquinol + NAD(+) + n H(+)(out). The enzyme catalyses a plastoquinone + NADPH + (n+1) H(+)(in) = a plastoquinol + NADP(+) + n H(+)(out). Functionally, NDH shuttles electrons from NAD(P)H:plastoquinone, via FMN and iron-sulfur (Fe-S) centers, to quinones in the photosynthetic chain and possibly in a chloroplast respiratory chain. The immediate electron acceptor for the enzyme in this species is believed to be plastoquinone. Couples the redox reaction to proton translocation, and thus conserves the redox energy in a proton gradient. The protein is NAD(P)H-quinone oxidoreductase subunit 2, chloroplastic of Physcomitrium patens (Spreading-leaved earth moss).